We begin with the raw amino-acid sequence, 314 residues long: ATP synthase gamma chain (314 aa).

Belongs to the ATPase gamma chain family. As to quaternary structure, F-type ATPases have 2 components, CF(1) - the catalytic core - and CF(0) - the membrane proton channel. CF(1) has five subunits: alpha(3), beta(3), gamma(1), delta(1), epsilon(1). CF(0) has three main subunits: a, b and c.

The protein localises to the cell membrane. Produces ATP from ADP in the presence of a proton gradient across the membrane. The gamma chain is believed to be important in regulating ATPase activity and the flow of protons through the CF(0) complex. The sequence is that of ATP synthase gamma chain from Limosilactobacillus reuteri (strain DSM 20016) (Lactobacillus reuteri).